A 74-amino-acid polypeptide reads, in one-letter code: Anaphase-promoting complex subunit 13 (74 aa).

It belongs to the APC13 family. The APC/C is composed of at least 12 subunits.

It is found in the nucleus. It participates in protein modification; protein ubiquitination. Functionally, component of the anaphase promoting complex/cyclosome (APC/C), a cell cycle-regulated E3 ubiquitin ligase that controls progression through mitosis and the G1 phase of the cell cycle. The APC/C complex acts by mediating ubiquitination and subsequent degradation of target proteins: it mainly mediates the formation of 'Lys-11'-linked polyubiquitin chains and, to a lower extent, the formation of 'Lys-48'- and 'Lys-63'-linked polyubiquitin chains. The APC/C complex catalyzes assembly of branched 'Lys-11'-/'Lys-48'-linked branched ubiquitin chains on target proteins. In Xenopus tropicalis (Western clawed frog), this protein is Anaphase-promoting complex subunit 13 (anapc13).